Reading from the N-terminus, the 184-residue chain is ATP synthase subunit b, chloroplastic (184 aa).

The chain crosses the membrane as a helical span at residues 27–49 (LATNPINLSVVLGVLIFFGKGVL).

The protein belongs to the ATPase B chain family. As to quaternary structure, F-type ATPases have 2 components, F(1) - the catalytic core - and F(0) - the membrane proton channel. F(1) has five subunits: alpha(3), beta(3), gamma(1), delta(1), epsilon(1). F(0) has four main subunits: a(1), b(1), b'(1) and c(10-14). The alpha and beta chains form an alternating ring which encloses part of the gamma chain. F(1) is attached to F(0) by a central stalk formed by the gamma and epsilon chains, while a peripheral stalk is formed by the delta, b and b' chains.

The protein localises to the plastid. It localises to the chloroplast thylakoid membrane. F(1)F(0) ATP synthase produces ATP from ADP in the presence of a proton or sodium gradient. F-type ATPases consist of two structural domains, F(1) containing the extramembraneous catalytic core and F(0) containing the membrane proton channel, linked together by a central stalk and a peripheral stalk. During catalysis, ATP synthesis in the catalytic domain of F(1) is coupled via a rotary mechanism of the central stalk subunits to proton translocation. Functionally, component of the F(0) channel, it forms part of the peripheral stalk, linking F(1) to F(0). The polypeptide is ATP synthase subunit b, chloroplastic (Atropa belladonna (Belladonna)).